Here is a 773-residue protein sequence, read N- to C-terminus: DEAD-box ATP-dependent RNA helicase 32 (773 aa).

The tract at residues 28–71 is disordered; sequence IDAGKPARGTRPPPLSKSSSSPADTAAAKRGAKGAGGVPSKAAG. The span at 43–56 shows a compositional bias: low complexity; the sequence is SKSSSSPADTAAAK. Residues 80–108 carry the Q motif motif; that stretch reads ARFDELPLSNKTKDGLRKAGYTEMSEIQR. The Helicase ATP-binding domain occupies 111–287; it reads LPHALCGRDV…RVSLKDPEYI (177 aa). 124-131 is an ATP binding site; it reads AKTGSGKT. The DEAD box motif lies at 235–238; that stretch reads DEAD. One can recognise a Helicase C-terminal domain in the interval 309–462; sequence PLEQKLNMLW…IKKPNTEQLQ (154 aa). Residues 664–715 adopt a coiled-coil conformation; the sequence is DKDKISQRYAEMLREMQEHDKEDKLEHKRILREKKLQKKLKLKRKRNEEMDA. Over residues 699-708 the composition is skewed to basic residues; the sequence is LQKKLKLKRK. The disordered stretch occupies residues 699–755; it reads LQKKLKLKRKRNEEMDAGSENSGSESDRDQRTASKGKKRYFNSDDEEGSKDAAKDGD.

This sequence belongs to the DEAD box helicase family. DDX10/DBP4 subfamily.

It carries out the reaction ATP + H2O = ADP + phosphate + H(+). In Oryza sativa subsp. japonica (Rice), this protein is DEAD-box ATP-dependent RNA helicase 32.